The chain runs to 384 residues: 1-deoxy-D-xylulose 5-phosphate reductoisomerase (384 aa).

Residues threonine 11, glycine 12, serine 13, isoleucine 14, lysine 38, and asparagine 123 each coordinate NADPH. 1-deoxy-D-xylulose 5-phosphate is bound at residue lysine 124. Glutamate 125 is an NADPH binding site. Aspartate 148 serves as a coordination point for Mn(2+). Positions 149, 150, 174, and 197 each coordinate 1-deoxy-D-xylulose 5-phosphate. Residue glutamate 150 participates in Mn(2+) binding. Glycine 203 is a binding site for NADPH. 4 residues coordinate 1-deoxy-D-xylulose 5-phosphate: serine 210, asparagine 215, lysine 216, and glutamate 219. Residue glutamate 219 coordinates Mn(2+).

This sequence belongs to the DXR family. Requires Mg(2+) as cofactor. Mn(2+) serves as cofactor.

The catalysed reaction is 2-C-methyl-D-erythritol 4-phosphate + NADP(+) = 1-deoxy-D-xylulose 5-phosphate + NADPH + H(+). It participates in isoprenoid biosynthesis; isopentenyl diphosphate biosynthesis via DXP pathway; isopentenyl diphosphate from 1-deoxy-D-xylulose 5-phosphate: step 1/6. Functionally, catalyzes the NADPH-dependent rearrangement and reduction of 1-deoxy-D-xylulose-5-phosphate (DXP) to 2-C-methyl-D-erythritol 4-phosphate (MEP). The polypeptide is 1-deoxy-D-xylulose 5-phosphate reductoisomerase (Halothermothrix orenii (strain H 168 / OCM 544 / DSM 9562)).